Reading from the N-terminus, the 256-residue chain is PHD finger protein ALFIN-LIKE 6 (256 aa).

The disordered stretch occupies residues 144–200 (SKDLSVNNNNSKSKPSGVKSRQSESLSKVAKMSSPPPKEEEEEEDESEDESEDDEQG). Residues 146 to 163 (DLSVNNNNSKSKPSGVKS) show a composition bias toward low complexity. The span at 182-199 (EEEEEEDESEDESEDDEQ) shows a compositional bias: acidic residues. Residues 200–252 (GAVCGACGDNYGTDEFWICCDACEKWFHGKCVKITPAKAEHIKHYKCPTCSNK) form a PHD-type zinc finger.

Belongs to the Alfin family. In terms of assembly, interacts with H3K4me3 and to a lesser extent with H3K4me2. As to expression, ubiquitously expressed.

The protein resides in the nucleus. In terms of biological role, histone-binding component that specifically recognizes H3 tails trimethylated on 'Lys-4' (H3K4me3), which mark transcription start sites of virtually all active genes. The sequence is that of PHD finger protein ALFIN-LIKE 6 (AL6) from Arabidopsis thaliana (Mouse-ear cress).